An 845-amino-acid polypeptide reads, in one-letter code: Protein P (845 aa).

Residues 1-179 (MPLSYQHFRK…FCGSPYSWEQ (179 aa)) are terminal protein domain (TP). The tract at residues 180 to 348 (ELHHGRSVTK…YCLSHLVNLL (169 aa)) is spacer. Disordered stretches follow at residues 186-205 (SVTK…QPSG), 222-245 (QPRL…SGSI), and 288-318 (YSHL…RSQS). Over residues 289-301 (SHLSTSKRQSSSG) the composition is skewed to polar residues. Residues 349-692 (EDWGPCADHG…YMNLYPVARQ (344 aa)) form a polymerase/reverse transcriptase domain (RT) region. The Reverse transcriptase domain maps to 359-602 (EHHIRIPRTP…YSLNFMGYII (244 aa)). The Mg(2+) site is built by D431, D553, and D554.

It belongs to the hepadnaviridae P protein family.

The catalysed reaction is DNA(n) + a 2'-deoxyribonucleoside 5'-triphosphate = DNA(n+1) + diphosphate. It carries out the reaction Endonucleolytic cleavage to 5'-phosphomonoester.. Activated by host HSP70 and HSP40 in vitro to be able to bind the epsilon loop of the pgRNA. Because deletion of the RNase H region renders the protein partly chaperone-independent, the chaperones may be needed indirectly to relieve occlusion of the RNA-binding site by this domain. Inhibited by several reverse-transcriptase inhibitors: Lamivudine, Adefovir and Entecavir. Its function is as follows. Multifunctional enzyme that converts the viral RNA genome into dsDNA in viral cytoplasmic capsids. This enzyme displays a DNA polymerase activity that can copy either DNA or RNA templates, and a ribonuclease H (RNase H) activity that cleaves the RNA strand of RNA-DNA heteroduplexes in a partially processive 3'- to 5'-endonucleasic mode. Neo-synthesized pregenomic RNA (pgRNA) are encapsidated together with the P protein, and reverse-transcribed inside the nucleocapsid. Initiation of reverse-transcription occurs first by binding the epsilon loop on the pgRNA genome, and is initiated by protein priming, thereby the 5'-end of (-)DNA is covalently linked to P protein. Partial (+)DNA is synthesized from the (-)DNA template and generates the relaxed circular DNA (RC-DNA) genome. After budding and infection, the RC-DNA migrates in the nucleus, and is converted into a plasmid-like covalently closed circular DNA (cccDNA). The activity of P protein does not seem to be necessary for cccDNA generation, and is presumably released from (+)DNA by host nuclear DNA repair machinery. The sequence is that of Protein P from Hepatitis B virus genotype A3 (isolate Cameroon/CMR711/1994) (HBV-A).